Consider the following 273-residue polypeptide: Cell division protein ZipA (273 aa).

Residue methionine 1 is a topological domain, periplasmic. A helical transmembrane segment spans residues glutamate 2–phenylalanine 22. Topologically, residues aspartate 23–arginine 273 are cytoplasmic. The interval glutamate 65–serine 125 is disordered. Basic and acidic residues predominate over residues valine 111–lysine 120.

Belongs to the ZipA family. As to quaternary structure, interacts with FtsZ via their C-terminal domains.

It is found in the cell inner membrane. Its function is as follows. Essential cell division protein that stabilizes the FtsZ protofilaments by cross-linking them and that serves as a cytoplasmic membrane anchor for the Z ring. Also required for the recruitment to the septal ring of downstream cell division proteins. In Ectopseudomonas mendocina (strain ymp) (Pseudomonas mendocina), this protein is Cell division protein ZipA.